A 689-amino-acid polypeptide reads, in one-letter code: Glycine--tRNA ligase beta subunit (689 aa).

The protein belongs to the class-II aminoacyl-tRNA synthetase family. Tetramer of two alpha and two beta subunits.

The protein resides in the cytoplasm. It catalyses the reaction tRNA(Gly) + glycine + ATP = glycyl-tRNA(Gly) + AMP + diphosphate. The chain is Glycine--tRNA ligase beta subunit from Enterobacter sp. (strain 638).